The primary structure comprises 137 residues: Basic phospholipase A2 homolog Ts-R6 (137 aa).

The N-terminal stretch at 1–16 is a signal peptide; it reads MRTLWIMAVLLLGVEG. 7 cysteine pairs are disulfide-bonded: Cys-42/Cys-130, Cys-44/Cys-60, Cys-59/Cys-110, Cys-65/Cys-137, Cys-66/Cys-103, Cys-73/Cys-97, and Cys-91/Cys-101.

Expressed by the venom gland.

The protein resides in the secreted. Its function is as follows. Snake venom phospholipase A2 homolog that induces local edema a few hours after injection (5-10 ug) in the hind paw and shows weak anticoagulant and myotoxic activities. This Trimeresurus stejnegeri (Chinese green tree viper) protein is Basic phospholipase A2 homolog Ts-R6.